Here is a 46-residue protein sequence, read N- to C-terminus: Protein PsbN (46 aa).

Residues 10–30 form a helical membrane-spanning segment; sequence VAIAVLAALLGLTGFGVYTAF.

The protein belongs to the PsbN family.

The protein localises to the cellular thylakoid membrane. Its function is as follows. May play a role in photosystem I and II biogenesis. In Synechococcus sp. (strain WH7803), this protein is Protein PsbN.